The primary structure comprises 369 residues: 4-hydroxy-3-methylbut-2-en-1-yl diphosphate synthase (flavodoxin) (369 aa).

[4Fe-4S] cluster is bound by residues Cys270, Cys273, Cys305, and Glu312.

Belongs to the IspG family. The cofactor is [4Fe-4S] cluster.

The catalysed reaction is (2E)-4-hydroxy-3-methylbut-2-enyl diphosphate + oxidized [flavodoxin] + H2O + 2 H(+) = 2-C-methyl-D-erythritol 2,4-cyclic diphosphate + reduced [flavodoxin]. Its pathway is isoprenoid biosynthesis; isopentenyl diphosphate biosynthesis via DXP pathway; isopentenyl diphosphate from 1-deoxy-D-xylulose 5-phosphate: step 5/6. In terms of biological role, converts 2C-methyl-D-erythritol 2,4-cyclodiphosphate (ME-2,4cPP) into 1-hydroxy-2-methyl-2-(E)-butenyl 4-diphosphate. The chain is 4-hydroxy-3-methylbut-2-en-1-yl diphosphate synthase (flavodoxin) from Pseudomonas syringae pv. tomato (strain ATCC BAA-871 / DC3000).